Reading from the N-terminus, the 675-residue chain is Protein PALS1 (675 aa).

Disordered regions lie at residues 1 to 32 (MTTS…HPKH) and 52 to 79 (RSAQ…KQEL). A required for the correct localization of PALS1 and PATJ at cell-cell contacts and the normal formation of tight junctions and adherens junctions region spans residues 1-345 (MTTSYMNGHV…QQIKPPPAKE (345 aa)). 2 positions are modified to phosphoserine: serine 14 and serine 25. Residues 21–140 (LGLASPEEHP…LKHIQHTLVD (120 aa)) are interaction with PARD6B. A compositionally biased stretch (basic and acidic residues) spans 54–79 (AQLERIRQQQEDMRRRREEEGKKQEL). Phosphoserine occurs at positions 83 and 84. L27 domains lie at 120 to 177 (KILE…NKAS) and 179 to 235 (PFPL…MQLE). Positions 181-243 (PLIANVQDLV…LEPITDERVY (63 aa)) are interaction with LIN7C. Positions 256-336 (IVRIEKARDI…TLTFVLIPSQ (81 aa)) constitute a PDZ domain. Residues 345–417 (ETVIHVKAHF…PGKSFQQQRE (73 aa)) form the SH3 domain. The 182-residue stretch at 479–660 (KRPIILIGPQ…AYQELLRLIN (182 aa)) folds into the Guanylate kinase-like domain. 486–493 (GPQNCGQN) contacts ATP.

It belongs to the MAGUK family. Heterodimer with MPP1. Forms a heterotrimeric complex composed of PALS1, LIN7B and PATJ; the N-terminal L27 domain of PALS1 interacts with the L27 domain of PATJ and the C-terminal L27 domain of PALS1 interacts with the L27 domain of LIN7B. Component of a complex composed of PALS1, CRB1 and MPP4. Component of a complex whose core is composed of ARHGAP17, AMOT, PALS1, PATJ and PARD3/PAR3. Component of a complex composed of PALS1, CRB1 and EPB41L5. Within the complex, interacts (via HOOK domain) with EPB41L5 (via FERM domain), and interacts with CRB1 (via intracellular domain). Component of a complex composed of PALS1, MPP3 and CRB1; PALS1 acts as a bridging protein between MPP3 (via guanylate kinase-like domain) and CRB1. Component of a complex composed of CRB3, PALS1 and PATJ. As part of the Crumbs complex; interacts with WWP1, the interaction is enhanced by AMOTL2 and facilitates WWP1 localization to the plasma membrane. The Crumbs complex promotes monoubiquitination of AMOTL2 by WWP1, which activates the Hippo signaling pathway. Interacts (via PDZ domain) with PATJ (via N-terminus). Interacts with EZR. Interacts (via PDZ domain) with CRB1 (via C-terminal ERLI motif). While the PDZ domain is sufficient for interaction with CRB1, the adjacent SH3 and guanylate kinase-like domains are likely to contribute to a high affinity interaction. Interacts with WWTR1/TAZ (via WW domain). Interacts with MPP7. Interacts (via PDZ domain) with CRB3 (via C-terminus). Interacts with LIN7C. Interacts with MPDZ. Interacts with PARD6B. Interacts with SC6A1. Interacts with CDH5; the interaction promotes PALS1 localization to cell junctions and is required for CDH5-mediated vascular lumen formation and endothelial cell. Interacts with NPHP1 (via coiled coil and SH3 domains). Interacts with NPHP4. Interacts with CRB2.

It is found in the golgi apparatus. Its subcellular location is the cell membrane. The protein resides in the endomembrane system. It localises to the cell junction. The protein localises to the tight junction. It is found in the adherens junction. Its subcellular location is the cell projection. The protein resides in the axon. It localises to the perikaryon. The protein localises to the apical cell membrane. Its function is as follows. Plays a role in tight junction biogenesis and in the establishment of cell polarity in epithelial cells. Also involved in adherens junction biogenesis by ensuring correct localization of the exocyst complex protein EXOC4/SEC8 which allows trafficking of adherens junction structural component CDH1 to the cell surface. Plays a role through its interaction with CDH5 in vascular lumen formation and endothelial membrane polarity. Required during embryonic and postnatal retinal development. Required for the maintenance of cerebellar progenitor cells in an undifferentiated proliferative state, preventing premature differentiation, and is required for cerebellar histogenesis, fissure formation, cerebellar layer organization and cortical development. Plays a role in neuronal progenitor cell survival, potentially via promotion of mTOR signaling. Plays a role in the radial and longitudinal extension of the myelin sheath in Schwann cells. May modulate SC6A1/GAT1-mediated GABA uptake by stabilizing the transporter. May play a role in the T-cell receptor-mediated activation of NF-kappa-B. Required for localization of EZR to the apical membrane of parietal cells and may play a role in the dynamic remodeling of the apical cytoskeleton. Required for the normal polarized localization of the vesicular marker STX4. Required for the correct trafficking of the myelin proteins PMP22 and MAG. Involved in promoting phosphorylation and cytoplasmic retention of transcriptional coactivators YAP1 and WWTR1/TAZ which leads to suppression of TGFB1-dependent transcription of target genes such as CCN2/CTGF, SERPINE1/PAI1, SNAI1/SNAIL1 and SMAD7. The protein is Protein PALS1 of Rattus norvegicus (Rat).